The chain runs to 332 residues: Glycine betaine-binding periplasmic protein OusX (332 aa).

Residues 1-21 (MRNISMATLALTTVLSTGLFA) form the signal peptide.

As to quaternary structure, the complex is composed of two ATP-binding proteins (OusV), two transmembrane proteins (OusW) and a solute-binding protein (OusX).

Its subcellular location is the periplasm. Part of the OusB ABC transporter complex involved in glycine betaine and choline uptake. Binds glycine betaine. The polypeptide is Glycine betaine-binding periplasmic protein OusX (Dickeya dadantii (strain 3937) (Erwinia chrysanthemi (strain 3937))).